Consider the following 572-residue polypeptide: Urease subunit alpha (572 aa).

Residues 134-572 form the Urease domain; the sequence is GGIDSHIHFI…LPLAQRYFLF (439 aa). Ni(2+) is bound by residues His-139, His-141, and Lys-222. The residue at position 222 (Lys-222) is an N6-carboxylysine. Residue His-224 participates in substrate binding. His-251 and His-277 together coordinate Ni(2+). The active-site Proton donor is His-325. Asp-365 lines the Ni(2+) pocket.

This sequence belongs to the metallo-dependent hydrolases superfamily. Urease alpha subunit family. As to quaternary structure, heterotrimer of UreA (gamma), UreB (beta) and UreC (alpha) subunits. Three heterotrimers associate to form the active enzyme. It depends on Ni cation as a cofactor. Post-translationally, carboxylation allows a single lysine to coordinate two nickel ions.

The protein localises to the cytoplasm. The enzyme catalyses urea + 2 H2O + H(+) = hydrogencarbonate + 2 NH4(+). Its pathway is nitrogen metabolism; urea degradation; CO(2) and NH(3) from urea (urease route): step 1/1. This chain is Urease subunit alpha, found in Paracidovorax citrulli (strain AAC00-1) (Acidovorax citrulli).